Here is a 317-residue protein sequence, read N- to C-terminus: tRNA dimethylallyltransferase (317 aa).

ATP is bound at residue 14 to 21 (GPTASGKT). 16 to 21 (TASGKT) contributes to the substrate binding site. Interaction with substrate tRNA regions lie at residues 39–42 (DSAL), 163–167 (QRIQR), and 248–253 (RCVGYR).

This sequence belongs to the IPP transferase family. Monomer. Requires Mg(2+) as cofactor.

It catalyses the reaction adenosine(37) in tRNA + dimethylallyl diphosphate = N(6)-dimethylallyladenosine(37) in tRNA + diphosphate. Catalyzes the transfer of a dimethylallyl group onto the adenine at position 37 in tRNAs that read codons beginning with uridine, leading to the formation of N6-(dimethylallyl)adenosine (i(6)A). In Paraburkholderia phymatum (strain DSM 17167 / CIP 108236 / LMG 21445 / STM815) (Burkholderia phymatum), this protein is tRNA dimethylallyltransferase.